Consider the following 212-residue polypeptide: dITP/XTP pyrophosphatase (212 aa).

7 to 12 serves as a coordination point for substrate; that stretch reads SNNAKK. Residues Glu39 and Asp68 each coordinate Mg(2+). The active-site Proton acceptor is Asp68. Substrate contacts are provided by residues Ser69, 165–168, Lys188, and 193–194; these read FGYD and HR.

The protein belongs to the HAM1 NTPase family. As to quaternary structure, homodimer. Mg(2+) serves as cofactor.

It catalyses the reaction XTP + H2O = XMP + diphosphate + H(+). The catalysed reaction is dITP + H2O = dIMP + diphosphate + H(+). It carries out the reaction ITP + H2O = IMP + diphosphate + H(+). Functionally, pyrophosphatase that catalyzes the hydrolysis of nucleoside triphosphates to their monophosphate derivatives, with a high preference for the non-canonical purine nucleotides XTP (xanthosine triphosphate), dITP (deoxyinosine triphosphate) and ITP. Seems to function as a house-cleaning enzyme that removes non-canonical purine nucleotides from the nucleotide pool, thus preventing their incorporation into DNA/RNA and avoiding chromosomal lesions. In Leptothrix cholodnii (strain ATCC 51168 / LMG 8142 / SP-6) (Leptothrix discophora (strain SP-6)), this protein is dITP/XTP pyrophosphatase.